Here is a 170-residue protein sequence, read N- to C-terminus: Adenine phosphoribosyltransferase (170 aa).

It belongs to the purine/pyrimidine phosphoribosyltransferase family. Homodimer.

It localises to the cytoplasm. The catalysed reaction is AMP + diphosphate = 5-phospho-alpha-D-ribose 1-diphosphate + adenine. It participates in purine metabolism; AMP biosynthesis via salvage pathway; AMP from adenine: step 1/1. Functionally, catalyzes a salvage reaction resulting in the formation of AMP, that is energically less costly than de novo synthesis. The sequence is that of Adenine phosphoribosyltransferase from Bacillus cereus (strain G9842).